Here is a 421-residue protein sequence, read N- to C-terminus: Serine protease HTRA2, mitochondrial (421 aa).

The helical transmembrane segment at 63 to 81 (VIRFFVPFSLGALASTMVA) threads the bilayer. Positions 74–77 (ALAS) match the IAP-binding motif. The interval 138–301 (SNGSGFVIEQ…IPIDYVKVFL (164 aa)) is serine protease. Active-site charge relay system residues include H156, D188, and S265. One can recognise a PDZ domain in the interval 324-409 (MGITMLTLTP…ELDIVILRGV (86 aa)).

Belongs to the peptidase S1C family. As to quaternary structure, interacts with th/DIAP1 (via BIR 2 domain).

The protein localises to the mitochondrion intermembrane space. Its subcellular location is the mitochondrion membrane. The catalysed reaction is Cleavage of non-polar aliphatic amino-acids at the P1 position, with a preference for Val, Ile and Met. At the P2 and P3 positions, Arg is selected most strongly with a secondary preference for other hydrophilic residues.. In terms of biological role, serine protease that shows proteolytic activity against a non-specific substrate beta-casein. Promotes or induces cell death either by direct binding to and inhibition of BIRC proteins (also called inhibitor of apoptosis proteins, IAPs), leading to an increase in caspase activity, or by a BIRC inhibition-independent, caspase-independent and serine protease activity-dependent mechanism. Can antagonize antiapoptotic activity of th/Diap1 by directly inducing the degradation of th/Diap1. The protein is Serine protease HTRA2, mitochondrial of Drosophila virilis (Fruit fly).